The primary structure comprises 216 residues: Small ribosomal subunit protein uS3c (216 aa).

Positions isoleucine 43–glutamate 118 constitute a KH type-2 domain.

It belongs to the universal ribosomal protein uS3 family. As to quaternary structure, part of the 30S ribosomal subunit.

It is found in the plastid. Its subcellular location is the chloroplast. In Dioscorea elephantipes (Elephant's foot yam), this protein is Small ribosomal subunit protein uS3c (rps3).